A 138-amino-acid chain; its full sequence is 6,7-dimethyl-8-ribityllumazine synthase (138 aa).

5-amino-6-(D-ribitylamino)uracil contacts are provided by residues Phe-13, 45–47, and 69–71; these read VFD and AVI. 74–75 serves as a coordination point for (2S)-2-hydroxy-3-oxobutyl phosphate; that stretch reads AT. His-77 serves as the catalytic Proton donor. Leu-102 provides a ligand contact to 5-amino-6-(D-ribitylamino)uracil. Arg-117 provides a ligand contact to (2S)-2-hydroxy-3-oxobutyl phosphate.

Belongs to the DMRL synthase family.

The catalysed reaction is (2S)-2-hydroxy-3-oxobutyl phosphate + 5-amino-6-(D-ribitylamino)uracil = 6,7-dimethyl-8-(1-D-ribityl)lumazine + phosphate + 2 H2O + H(+). It participates in cofactor biosynthesis; riboflavin biosynthesis; riboflavin from 2-hydroxy-3-oxobutyl phosphate and 5-amino-6-(D-ribitylamino)uracil: step 1/2. Catalyzes the formation of 6,7-dimethyl-8-ribityllumazine by condensation of 5-amino-6-(D-ribitylamino)uracil with 3,4-dihydroxy-2-butanone 4-phosphate. This is the penultimate step in the biosynthesis of riboflavin. In Methanobrevibacter smithii (strain ATCC 35061 / DSM 861 / OCM 144 / PS), this protein is 6,7-dimethyl-8-ribityllumazine synthase.